Reading from the N-terminus, the 285-residue chain is Bifunctional protein FolD (285 aa).

NADP(+)-binding positions include 169–171, serine 194, and isoleucine 235; that span reads GRS.

This sequence belongs to the tetrahydrofolate dehydrogenase/cyclohydrolase family. Homodimer.

The catalysed reaction is (6R)-5,10-methylene-5,6,7,8-tetrahydrofolate + NADP(+) = (6R)-5,10-methenyltetrahydrofolate + NADPH. The enzyme catalyses (6R)-5,10-methenyltetrahydrofolate + H2O = (6R)-10-formyltetrahydrofolate + H(+). The protein operates within one-carbon metabolism; tetrahydrofolate interconversion. Functionally, catalyzes the oxidation of 5,10-methylenetetrahydrofolate to 5,10-methenyltetrahydrofolate and then the hydrolysis of 5,10-methenyltetrahydrofolate to 10-formyltetrahydrofolate. This is Bifunctional protein FolD from Microcystis aeruginosa (strain NIES-843 / IAM M-2473).